A 116-amino-acid chain; its full sequence is Large ribosomal subunit protein uL24 (116 aa).

Belongs to the universal ribosomal protein uL24 family. As to quaternary structure, part of the 50S ribosomal subunit.

Functionally, one of two assembly initiator proteins, it binds directly to the 5'-end of the 23S rRNA, where it nucleates assembly of the 50S subunit. Its function is as follows. Located at the polypeptide exit tunnel on the outside of the subunit. The sequence is that of Large ribosomal subunit protein uL24 from Methanosarcina barkeri (strain Fusaro / DSM 804).